The chain runs to 431 residues: Enolase (431 aa).

Position 166 (glutamine 166) interacts with (2R)-2-phosphoglycerate. Residue glutamate 208 is the Proton donor of the active site. Aspartate 245, glutamate 288, and aspartate 315 together coordinate Mg(2+). Residues lysine 340, arginine 369, serine 370, and lysine 391 each coordinate (2R)-2-phosphoglycerate. The active-site Proton acceptor is the lysine 340.

This sequence belongs to the enolase family. Mg(2+) is required as a cofactor.

The protein localises to the cytoplasm. It localises to the secreted. It is found in the cell surface. The enzyme catalyses (2R)-2-phosphoglycerate = phosphoenolpyruvate + H2O. It functions in the pathway carbohydrate degradation; glycolysis; pyruvate from D-glyceraldehyde 3-phosphate: step 4/5. Catalyzes the reversible conversion of 2-phosphoglycerate (2-PG) into phosphoenolpyruvate (PEP). It is essential for the degradation of carbohydrates via glycolysis. In Clostridium tetani (strain Massachusetts / E88), this protein is Enolase.